The chain runs to 130 residues: Sec-independent protein translocase protein TatB (130 aa).

The helical transmembrane segment at 1–21 (MFDIGFTELTLIFIIGLVVLG) threads the bilayer. Composition is skewed to basic and acidic residues over residues 57–67 (QDMQERMEKQM) and 111–130 (PSDK…RRHD). A disordered region spans residues 57–130 (QDMQERMEKQ…NHDQDSRRHD (74 aa)).

Belongs to the TatB family. As to quaternary structure, the Tat system comprises two distinct complexes: a TatABC complex, containing multiple copies of TatA, TatB and TatC subunits, and a separate TatA complex, containing only TatA subunits. Substrates initially bind to the TatABC complex, which probably triggers association of the separate TatA complex to form the active translocon.

It localises to the cell inner membrane. Functionally, part of the twin-arginine translocation (Tat) system that transports large folded proteins containing a characteristic twin-arginine motif in their signal peptide across membranes. Together with TatC, TatB is part of a receptor directly interacting with Tat signal peptides. TatB may form an oligomeric binding site that transiently accommodates folded Tat precursor proteins before their translocation. The chain is Sec-independent protein translocase protein TatB from Alcanivorax borkumensis (strain ATCC 700651 / DSM 11573 / NCIMB 13689 / SK2).